Reading from the N-terminus, the 361-residue chain is Deoxyribonuclease (361 aa).

An N-terminal signal peptide occupies residues 1-24; it reads MMHLLRRGAFAILLIVLLPSAALA. His-149 is a catalytic residue.

The protein belongs to the DNase I family. Requires Mg(2+) as cofactor. The cofactor is Ca(2+).

It localises to the secreted. Its function is as follows. DNA nuclease able to digest short and long DNA substrate. Is resistant to ionic strength and thus active at high salt concentration. The chain is Deoxyribonuclease from Thioalkalivibrio sp. (strain K90mix).